We begin with the raw amino-acid sequence, 1544 residues long: Protein mahjong (1544 aa).

Residues 1-110 are disordered; it reads MSEGSGSENA…AAADRRQATK (110 aa). The span at 10 to 35 shows a compositional bias: low complexity; sequence AAAAEAAAEAEAATEAALMAEAVAVA. Positions 38-91 are enriched in acidic residues; the sequence is SDEEEQPEAEDMPEQAGDNQEEDAAEQQDGGEPEADEDADADDAMSVENAENES. Residues Ser-565 and Ser-569 each carry the phosphoserine modification. Residues 912-944 form the LisH domain; it reads NKQQLYQLIFEHLESNGLSQTAQMLQREVGLPL. Disordered regions lie at residues 946–973 and 987–1059; these read TPTT…SRNR and GNGD…LAED. A Phosphoserine modification is found at Ser-955. Low complexity predominate over residues 961–971; sequence SLPSGSSSLSR. Residues 1016-1027 show a composition bias toward polar residues; sequence PNFSSLNTTQTP. 2 consecutive short sequence motifs (DWD box) follow at residues 1302-1309 and 1338-1345; these read VLWDVRSG and EVWDLRTF. Disordered regions lie at residues 1447-1475 and 1487-1544; these read KSER…ENTF and LRNL…SSDD. Acidic residues-rich tracts occupy residues 1451-1467 and 1495-1535; these read SEEE…EDGS and NDDE…DVLE.

It belongs to the VPRBP/DCAF1 family. In terms of assembly, component of the CUL4-RBX1-DDB1-DCAF1 E3 ubiquitin-protein ligase complex. Interacts with l(2)gl.

The protein localises to the nucleus. Its pathway is protein modification; protein ubiquitination. Its function is as follows. Probable substrate recognition component of tsome E3 ubiquitin-protein ligase complex. Plays a key role in cell competition via its interaction with l(2)gl. The protein is Protein mahjong (mahj) of Drosophila melanogaster (Fruit fly).